The sequence spans 141 residues: Hemoglobin subunit alpha-2 (141 aa).

Residue serine 1 is modified to N-acetylserine. The Globin domain occupies 1 to 141 (SLSTKDKETV…LARALSEKYR (141 aa)). An O2-binding site is contributed by histidine 59. A heme b-binding site is contributed by histidine 88.

Belongs to the globin family. Hb2 is a heterotetramer of two alpha-2 chains and two beta chains. Red blood cells.

Functionally, involved in oxygen transport from gills to the various peripheral tissues. This Notothenia angustata (Rockcod) protein is Hemoglobin subunit alpha-2 (hba2).